We begin with the raw amino-acid sequence, 498 residues long: Aminotransferase swnA (498 aa).

This sequence belongs to the class-I pyridoxal-phosphate-dependent aminotransferase family. It depends on pyridoxal 5'-phosphate as a cofactor.

It participates in mycotoxin biosynthesis. Its function is as follows. Aminotransferase; part of the gene cluster that mediates the biosynthesis of swainsonine (SW), a cytotoxic fungal alkaloid and a potential cancer therapy drug. Swainsonine production occurs via a multibranched pathway and is dispensable for fungal colonization of plants and infection of insect hosts. The first step of swainsonine biosynthesis is the production of the precursor pipecolic acid (PA) via conversion of L-lysine (Lys) to 1-piperideine-6-carboxylate (P6C) by the aminotransferase swnA, the latter being further reduced to PA by the reductase swnR. PA can be converted from lysine by both the SW biosynthetic cluster and the unclustered genes such as lysine cyclodeaminase. The PKS-NRPS hybrid synthetase swnK uptakes and condensates PA and malonyl-CoA with and without skipping of the ketoreductase (KR) domain in order to produce 3 intermediates, 1-oxoindolizidine, (1S)-1-hydroxyindolizin, and (1R)-1-hydroxyindolizine; with the transisomer (1S)-1-hydroxyindolizin being predominant. The terminal thioester reductase (TE) domain of swnK is involved in reduction of the thioester bond to release the intermediate aldehydes. The oxidoreductase swnN could contribute to the reduction of 1-oxoindolizidine to (1S)-1-hydroxyindolizin and (1R)-1-hydroxyindolizine, contributing to the major route of SW production. The dioxygenase swnH2 would be responsible for the oxidization of (1R)-1-hydroxyindolizine into (1R,2S)-1,2-dihydroxyindolizine and of (1S)-1-hydroxyindolizin to yield both (1R,2S)-1,2-dihydroxyindolizine and (1S,2S)-1,2-dihydroxyindolizine. The dioxygenase swnH1 then performs the conversion of the 1,2-dihydroxyindolizine epimers to SW. This Metarhizium robertsii (strain ARSEF 23 / ATCC MYA-3075) (Metarhizium anisopliae (strain ARSEF 23)) protein is Aminotransferase swnA.